A 1500-amino-acid polypeptide reads, in one-letter code: MTRILTACKVVKTLKSGFGLANVTSKRQWDFSRPGIRLLSVKAQTAHIVLEDGTKMKGYSFGHPSSVAGEVVFNTGLGGYSEALTDPAYKGQILTMANPIIGNGGAPDTTARDELGLNKYMESDGIKVAGLLVLNYSHDYNHWLATKSLGQWLQEEKVPAIYGVDTRMLTKIIRDKGTMLGKIEFEGQSVDFVDPNKQNLIAEVSTKDVKVFGKGNPTKVVAVDCGIKNNVIRLLVKRGAEVHLVPWNHDFTQMDYDGLLIAGGPGNPALAQPLIQNVKKILESDRKEPLFGISTGNIITGLAAGAKSYKMSMANRGQNQPVLNITNRQAFITAQNHGYALDNTLPAGWKPLFVNVNDQTNEGIMHESKPFFAVQFHPEVSPGPTDTEYLFDSFFSLIKKGKGTTITSVLPKPALVASRVEVSKVLILGSGGLSIGQAGEFDYSGSQAVKAMKEENVKTVLMNPNIASVQTNEVGLKQADAVYFLPITPQFVTEVIKAERPDGLILGMGGQTALNCGVELFKRGVLKEYGVKVLGTSVESIMATEDRQLFSDKLNEINEKIAPSFAVESMEDALKAADTIGYPVMIRSAYALGGLGSGICPNKETLMDLGTKAFAMTNQILVERSVTGWKEIEYEVVRDADDNCVTVCNMENVDAMGVHTGDSVVVAPAQTLSNAEFQMLRRTSINVVRHLGIVGECNIQFALHPTSMEYCIIEVNARLSRSSALASKATGYPLAFIAAKIALGIPLPEIKNVVSGKTSACFEPSLDYMVTKIPRWDLDRFHGTSSRIGSSMKSVGEVMAIGRTFEESFQKALRMCHPSVDGFTPRLPMNKEWPANLDLRKELSEPSSTRIYAIAKALENNMSLDEIVKLTSIDKWFLYKMRDILNMDKTLKGLNSESVTEETLRQAKEIGFSDKQISKCLGLTEAQTRELRLKKNIHPWVKQIDTLAAEYPSVTNYLYVTYNGQEHDIKFDEHGIMVLGCGPYHIGSSVEFDWCAVSSIRTLRQLGKKTVVVNCNPETVSTDFDECDKLYFEELSLERILDIYHQEACNGCIISVGGQIPNNLAVPLYKNGVKIMGTSPLQIDRAEDRSIFSAVLDELKVAQAPWKAVNTLNEALEFANSVGYPCLLRPSYVLSGSAMNVVFSEDEMKRFLEEATRVSQEHPVVLTKFIEGAREVEMDAVGKEGRVISHAISEHVEDAGVHSGDATLMLPTQTISQGAIEKVKDATRKIAKAFAISGPFNVQFLVKGNDVLVIECNLRASRSFPFVSKTLGVDFIDVATKVMIGESVDEKHLPTLEQPIIPSDYVAIKAPMFSWPRLRDADPILRCEMASTGEVACFGEGIHTAFLKAMLSTGFKIPQKGILIGIQQSFRPRFLGVAEQLHNEGFKLFATEATSDWLNANNVPATPVAWPSQEGQNPSLSSIRKLIRDGSIDLVINLPNNNTKFVHDNYVIRRTAVDSGIALLTNFQVTKLFAEAVQKARTVDSKSLFHYRQYSAGKAA.

Residues 1–38 constitute a mitochondrion transit peptide; the sequence is MTRILTACKVVKTLKSGFGLANVTSKRQWDFSRPGIRL. The segment at 39-218 is anthranilate phosphoribosyltransferase homolog; the sequence is LSVKAQTAHI…VKVFGKGNPT (180 aa). N6-acetyllysine; alternate occurs at positions 55, 57, and 119. N6-glutaryllysine; alternate is present on lysine 55. Lysine 55, lysine 57, and lysine 119 each carry N6-succinyllysine; alternate. At serine 148 the chain carries Phosphoserine. N6-acetyllysine; alternate occurs at positions 157 and 171. An N6-succinyllysine; alternate modification is found at lysine 157. Residue lysine 171 is modified to N6-glutaryllysine; alternate. Lysine 176 carries the post-translational modification N6-glutaryllysine. The residue at position 182 (lysine 182) is an N6-acetyllysine. Position 189 is a phosphoserine (serine 189). Lysine 197 carries the post-translational modification N6-acetyllysine. Lysine 207, lysine 210, lysine 214, lysine 219, and lysine 228 each carry N6-acetyllysine; alternate. Residues lysine 207, lysine 210, lysine 214, lysine 219, and lysine 228 each carry the N6-glutaryllysine; alternate modification. Position 207 is an N6-succinyllysine; alternate (lysine 207). Residue lysine 214 is modified to N6-succinyllysine; alternate. The Glutamine amidotransferase type-1 domain maps to 219-404; it reads KVVAVDCGIK…FSLIKKGKGT (186 aa). At lysine 237 the chain carries N6-glutaryllysine. An N6-acetyllysine modification is found at lysine 279. N6-acetyllysine; alternate occurs at positions 280, 287, 307, and 310. Position 280 is an N6-glutaryllysine; alternate (lysine 280). Lysine 287 and lysine 307 each carry N6-succinyllysine; alternate. 2 positions are modified to N6-glutaryllysine; alternate: lysine 307 and lysine 310. Lysine 400 bears the N6-succinyllysine mark. 4 positions are modified to N6-glutaryllysine; alternate: lysine 402, lysine 412, lysine 453, and lysine 458. Lysine 402 and lysine 412 each carry N6-succinyllysine; alternate. An N6-acetyllysine; alternate mark is found at lysine 412, lysine 453, lysine 458, lysine 522, lysine 527, and lysine 532. N6-succinyllysine; alternate is present on residues lysine 458, lysine 522, and lysine 527. An N6-glutaryllysine; alternate mark is found at lysine 527 and lysine 532. A Phosphoserine; alternate modification is found at serine 537. Serine 537 carries O-linked (GlcNAc) serine; alternate glycosylation. Serine 540 carries the phosphoserine modification. Residues 551 to 743 form the ATP-grasp 1 domain; the sequence is SDKLNEINEK…LAFIAAKIAL (193 aa). An N6-acetyllysine; alternate mark is found at lysine 553 and lysine 560. The residue at position 553 (lysine 553) is an N6-glutaryllysine; alternate. 2 positions are modified to N6-succinyllysine; alternate: lysine 553 and lysine 560. Serine 569 is subject to Phosphoserine. 3 positions are modified to N6-acetyllysine; alternate: lysine 575, lysine 603, and lysine 612. N6-succinyllysine; alternate is present on residues lysine 575, lysine 603, and lysine 612. Lysine 630 is modified (N6-acetyllysine). Lysine 728 carries the post-translational modification N6-glutaryllysine. N6-acetyllysine; alternate occurs at positions 751, 757, 772, 793, 811, 831, 841, and 856. Residues lysine 751 and lysine 757 each carry the N6-succinyllysine; alternate modification. Residues lysine 757, lysine 772, lysine 793, and lysine 811 each carry the N6-glutaryllysine; alternate modification. N6-succinyllysine; alternate is present on lysine 793. N6-succinyllysine; alternate is present on lysine 831. An N6-glutaryllysine; alternate mark is found at lysine 841 and lysine 856. Residue lysine 869 is modified to N6-glutaryllysine. 3 positions are modified to N6-acetyllysine; alternate: lysine 875, lysine 889, and lysine 892. Residues lysine 875, lysine 889, and lysine 892 each carry the N6-glutaryllysine; alternate modification. An N6-succinyllysine; alternate mark is found at lysine 875, lysine 889, and lysine 892. 2 positions are modified to phosphoserine: serine 896 and serine 898. 3 positions are modified to N6-acetyllysine; alternate: lysine 908, lysine 915, and lysine 919. Residues lysine 908, lysine 915, and lysine 919 each carry the N6-glutaryllysine; alternate modification. 2 positions are modified to N6-succinyllysine; alternate: lysine 915 and lysine 919. Lysine 935 is modified (N6-acetyllysine). Serine 1036 bears the Phosphoserine mark. An N6-acetyllysine; alternate modification is found at lysine 1074. N6-glutaryllysine; alternate is present on lysine 1074. Lysine 1074 is modified (N6-succinyllysine; alternate). A phosphoserine mark is found at serine 1079, serine 1090, and serine 1093. In terms of domain architecture, ATP-grasp 2 spans 1093–1284; the sequence is SAVLDELKVA…FIDVATKVMI (192 aa). N6-acetyllysine; alternate is present on lysine 1100. Position 1100 is an N6-succinyllysine; alternate (lysine 1100). Residue lysine 1149 is modified to N6-succinyllysine. N6-acetyllysine; alternate is present on residues lysine 1168 and lysine 1183. An N6-glutaryllysine; alternate mark is found at lysine 1168 and lysine 1183. An N6-succinyllysine; alternate mark is found at lysine 1168 and lysine 1183. Serine 1203 carries the post-translational modification Phosphoserine. Lysine 1222 is modified (N6-acetyllysine). Lysine 1224 bears the N6-glutaryllysine mark. An N6-acetyllysine; alternate mark is found at lysine 1232, lysine 1269, and lysine 1291. Residues lysine 1232, lysine 1269, and lysine 1291 each carry the N6-succinyllysine; alternate modification. Serine 1331 carries an O-linked (GlcNAc) serine glycan. A glycan (O-linked (GlcNAc) threonine) is linked at threonine 1332. Positions 1355–1500 constitute an MGS-like domain; the sequence is FKIPQKGILI…YRQYSAGKAA (146 aa). Lysine 1356 carries the post-translational modification N6-acetyllysine; alternate. Lysine 1356 and lysine 1360 each carry N6-glutaryllysine; alternate. An N6-succinyllysine; alternate mark is found at lysine 1356 and lysine 1360. Residues threonine 1391, threonine 1394, and tryptophan 1410 each coordinate N-acetyl-L-glutamate. Residues serine 1419 and serine 1431 each carry the phosphoserine modification. N-acetyl-L-glutamate contacts are provided by asparagine 1437 and asparagine 1440. An N6-acetyllysine; alternate modification is found at lysine 1444. Lysine 1444 is modified (N6-succinyllysine; alternate). An N-acetyl-L-glutamate-binding site is contributed by asparagine 1449. 3 positions are modified to N6-acetyllysine; alternate: lysine 1471, lysine 1479, and lysine 1486. N6-succinyllysine; alternate occurs at positions 1471, 1479, and 1486. An N6-glutaryllysine; alternate mark is found at lysine 1479 and lysine 1486.

As to quaternary structure, can form homooligomers (monomers as predominant form and dimers). Post-translationally, 50% of the mature protein that was isolated had Leu-39 as its N-terminal residue and 50% had Ser-40 suggesting two adjacent processing sites. However, the possibility of proteolytic removal of Leu-39 during the isolation of the enzyme cannot be excluded. Undergoes proteolytic cleavage in the C-terminal region corresponding to the loss of approximately 12 AA residues from the C-terminus. Succinylated at Lys-287 and Lys-1291. Desuccinylated at Lys-1291 by SIRT5, leading to activation. In terms of processing, glutarylated. Glutarylation levels increase during fasting. Deglutarylated by SIRT5 at Lys-55, Lys-219, Lys-412, Lys-889, Lys-892, Lys-915, Lys-1360 and Lys-1486, leading to activation. Primarily in the liver and small intestine.

The protein localises to the mitochondrion. Its subcellular location is the nucleus. It localises to the nucleolus. It is found in the cell membrane. It catalyses the reaction hydrogencarbonate + NH4(+) + 2 ATP = carbamoyl phosphate + 2 ADP + phosphate + 2 H(+). Requires N-acetyl-L-glutamate (NAG) as an allosteric activator. N-acetyl-L-beta-phenylglutamate (Phe-NAG) can also activate CPSase I, but with an activation constant that is 2-fold higher than that for NAG. Involved in the urea cycle of ureotelic animals where the enzyme plays an important role in removing excess ammonia from the cell. The sequence is that of Carbamoyl-phosphate synthase [ammonia], mitochondrial (Cps1) from Rattus norvegicus (Rat).